Reading from the N-terminus, the 268-residue chain is Tryptophan synthase alpha chain (268 aa).

Residues Glu49 and Asp60 each act as proton acceptor in the active site.

It belongs to the TrpA family. As to quaternary structure, tetramer of two alpha and two beta chains.

The enzyme catalyses (1S,2R)-1-C-(indol-3-yl)glycerol 3-phosphate + L-serine = D-glyceraldehyde 3-phosphate + L-tryptophan + H2O. Its pathway is amino-acid biosynthesis; L-tryptophan biosynthesis; L-tryptophan from chorismate: step 5/5. Its function is as follows. The alpha subunit is responsible for the aldol cleavage of indoleglycerol phosphate to indole and glyceraldehyde 3-phosphate. This Vibrio vulnificus (strain CMCP6) protein is Tryptophan synthase alpha chain.